The chain runs to 348 residues: Dihydroorotase (348 aa).

Zn(2+) is bound by residues His17 and His19. Substrate is bound by residues 19–21 (HLR) and Asn45. Residues Lys103, His140, and His178 each contribute to the Zn(2+) site. At Lys103 the chain carries N6-carboxylysine. Residue His140 coordinates substrate. Leu223 lines the substrate pocket. Asp251 is a Zn(2+) binding site. Asp251 is a catalytic residue. 2 residues coordinate substrate: His255 and Ala267.

This sequence belongs to the metallo-dependent hydrolases superfamily. DHOase family. Class II DHOase subfamily. As to quaternary structure, homodimer. Requires Zn(2+) as cofactor.

It catalyses the reaction (S)-dihydroorotate + H2O = N-carbamoyl-L-aspartate + H(+). It functions in the pathway pyrimidine metabolism; UMP biosynthesis via de novo pathway; (S)-dihydroorotate from bicarbonate: step 3/3. In terms of biological role, catalyzes the reversible cyclization of carbamoyl aspartate to dihydroorotate. The sequence is that of Dihydroorotase from Yersinia pseudotuberculosis serotype I (strain IP32953).